The chain runs to 234 residues: Sugar fermentation stimulation protein A (234 aa).

A DNA-binding region (H-T-H motif) is located at residues 201 to 220 (LLSEAQNKGVEVLAYKAELS).

This sequence belongs to the SfsA family.

Its function is as follows. Binds to DNA non-specifically. Could be a regulatory factor involved in maltose metabolism. This chain is Sugar fermentation stimulation protein A, found in Salmonella choleraesuis (strain SC-B67).